The primary structure comprises 122 residues: MKEYFLIGIGGFTGAVLRYVISGIIPVKFGIPTGTLMVNLIGSFIVGFLMYSSLFTGISYEYRLFIITGFCGALTTFSTFSYESFSLLEQHYFIKSGINILTNVTGCISMIYFGRMVSSSFW.

The next 4 membrane-spanning stretches (helical) occupy residues 5–25 (FLIG…SGII), 29–49 (FGIP…VGFL), 65–85 (FIIT…YESF), and 93–113 (FIKS…MIYF). Na(+) contacts are provided by glycine 72 and threonine 75.

It belongs to the fluoride channel Fluc/FEX (TC 1.A.43) family.

It localises to the cell membrane. It catalyses the reaction fluoride(in) = fluoride(out). With respect to regulation, na(+) is not transported, but it plays an essential structural role and its presence is essential for fluoride channel function. Its function is as follows. Fluoride-specific ion channel. Important for reducing fluoride concentration in the cell, thus reducing its toxicity. The polypeptide is Fluoride-specific ion channel FluC (Methanococcus vannielii (strain ATCC 35089 / DSM 1224 / JCM 13029 / OCM 148 / SB)).